The primary structure comprises 446 residues: Tektin-4 (446 aa).

3 coiled-coil regions span residues 182–215 (IRNVQELLKRTLDQAAQQIRQNRDAKEALEMDYS), 297–346 (DAIA…NDKS), and 378–422 (SEVG…ANSI).

This sequence belongs to the tektin family.

The protein localises to the cytoplasm. It localises to the cytoskeleton. Its subcellular location is the cilium axoneme. The protein resides in the cell projection. It is found in the cilium. The protein localises to the flagellum. Its function is as follows. Microtubule inner protein (MIP) part of the dynein-decorated doublet microtubules (DMTs) in cilia and flagellar axoneme. Forms filamentous polymers in the walls of ciliary and flagellar microtubules. Contributes to normal sperm motility. In Xenopus laevis (African clawed frog), this protein is Tektin-4 (tekt4).